The sequence spans 186 residues: Peptidyl-tRNA hydrolase (186 aa).

Y14 contacts tRNA. The active-site Proton acceptor is the H19. TRNA contacts are provided by F65, N67, and N113.

This sequence belongs to the PTH family. Monomer.

It is found in the cytoplasm. It catalyses the reaction an N-acyl-L-alpha-aminoacyl-tRNA + H2O = an N-acyl-L-amino acid + a tRNA + H(+). Hydrolyzes ribosome-free peptidyl-tRNAs (with 1 or more amino acids incorporated), which drop off the ribosome during protein synthesis, or as a result of ribosome stalling. In terms of biological role, catalyzes the release of premature peptidyl moieties from peptidyl-tRNA molecules trapped in stalled 50S ribosomal subunits, and thus maintains levels of free tRNAs and 50S ribosomes. The sequence is that of Peptidyl-tRNA hydrolase from Limosilactobacillus reuteri (strain DSM 20016) (Lactobacillus reuteri).